The sequence spans 426 residues: 3-phosphoshikimate 1-carboxyvinyltransferase (426 aa).

Residues K22, S23, and R27 each contribute to the 3-phosphoshikimate site. A phosphoenolpyruvate-binding site is contributed by K22. Residues G96 and R124 each contribute to the phosphoenolpyruvate site. 3-phosphoshikimate-binding residues include S170, S171, Q172, S198, D314, N337, and K341. Residue Q172 participates in phosphoenolpyruvate binding. D314 acts as the Proton acceptor in catalysis. Phosphoenolpyruvate is bound by residues R345, R387, and K412.

It belongs to the EPSP synthase family. Monomer.

The protein localises to the cytoplasm. The catalysed reaction is 3-phosphoshikimate + phosphoenolpyruvate = 5-O-(1-carboxyvinyl)-3-phosphoshikimate + phosphate. The protein operates within metabolic intermediate biosynthesis; chorismate biosynthesis; chorismate from D-erythrose 4-phosphate and phosphoenolpyruvate: step 6/7. Catalyzes the transfer of the enolpyruvyl moiety of phosphoenolpyruvate (PEP) to the 5-hydroxyl of shikimate-3-phosphate (S3P) to produce enolpyruvyl shikimate-3-phosphate and inorganic phosphate. The sequence is that of 3-phosphoshikimate 1-carboxyvinyltransferase from Vibrio atlanticus (strain LGP32) (Vibrio splendidus (strain Mel32)).